Here is a 318-residue protein sequence, read N- to C-terminus: tRNA U34 carboxymethyltransferase (318 aa).

Carboxy-S-adenosyl-L-methionine is bound by residues K88, W102, K107, G126, L176–E177, M192, Y196, and R311.

It belongs to the class I-like SAM-binding methyltransferase superfamily. CmoB family. As to quaternary structure, homotetramer.

It catalyses the reaction carboxy-S-adenosyl-L-methionine + 5-hydroxyuridine(34) in tRNA = 5-carboxymethoxyuridine(34) in tRNA + S-adenosyl-L-homocysteine + H(+). Its function is as follows. Catalyzes carboxymethyl transfer from carboxy-S-adenosyl-L-methionine (Cx-SAM) to 5-hydroxyuridine (ho5U) to form 5-carboxymethoxyuridine (cmo5U) at position 34 in tRNAs. This Pseudomonas putida (strain W619) protein is tRNA U34 carboxymethyltransferase.